Here is a 422-residue protein sequence, read N- to C-terminus: Dihydrolipoyllysine-residue succinyltransferase component of 2-oxoglutarate dehydrogenase complex (422 aa).

The Lipoyl-binding domain maps to 1–76 (MPEVKVPELA…EVGQAIAVIG (76 aa)). The residue at position 42 (lysine 42) is an N6-lipoyllysine. The tract at residues 77 to 184 (EGSGNASKEN…APAKEEKKYN (108 aa)) is disordered. Polar residues-rich tracts occupy residues 80 to 94 (GNAS…TPQQ) and 114 to 130 (EVNQ…NATP). The region spanning 127 to 163 (NATPSARRYARENGVNLAEVSPKTNDVVRKEDIDKKQ) is the Peripheral subunit-binding (PSBD) domain. Over residues 152 to 163 (DVVRKEDIDKKQ) the composition is skewed to basic and acidic residues. The span at 164–176 (QAPASTQTTQQAP) shows a compositional bias: low complexity. Residues histidine 393 and aspartate 397 contribute to the active site.

The protein belongs to the 2-oxoacid dehydrogenase family. As to quaternary structure, forms a 24-polypeptide structural core with octahedral symmetry. Part of the 2-oxoglutarate dehydrogenase (OGDH) complex composed of E1 (2-oxoglutarate dehydrogenase), E2 (dihydrolipoamide succinyltransferase) and E3 (dihydrolipoamide dehydrogenase); the complex contains multiple copies of the three enzymatic components (E1, E2 and E3). Requires (R)-lipoate as cofactor.

It catalyses the reaction N(6)-[(R)-dihydrolipoyl]-L-lysyl-[protein] + succinyl-CoA = N(6)-[(R)-S(8)-succinyldihydrolipoyl]-L-lysyl-[protein] + CoA. It functions in the pathway amino-acid degradation; L-lysine degradation via saccharopine pathway; glutaryl-CoA from L-lysine: step 6/6. Functionally, E2 component of the 2-oxoglutarate dehydrogenase (OGDH) complex which catalyzes the second step in the conversion of 2-oxoglutarate to succinyl-CoA and CO(2). The protein is Dihydrolipoyllysine-residue succinyltransferase component of 2-oxoglutarate dehydrogenase complex (odhB) of Staphylococcus aureus (strain bovine RF122 / ET3-1).